Consider the following 1622-residue polypeptide: Ferredoxin-dependent glutamate synthase 1, chloroplastic/mitochondrial (1622 aa).

The N-terminal 105 residues, 1–105, are a transit peptide targeting the chloroplast and mitochondrion; sequence MAMQSLSPVP…LEDILSERGA (105 aa). The For GATase activity role is filled by Cys106. One can recognise a Glutamine amidotransferase type-2 domain in the interval 106-505; it reads CGVGFIANLD…PGMMIAVDLV (400 aa). 1184–1241 lines the FMN pocket; sequence LTETHQTLIANGLRERVILRVDGGLKSGVDVLMAAAMGADEYGFGSLAMIATGCVMAR. Positions 1237, 1243, and 1248 each coordinate [3Fe-4S] cluster.

The protein belongs to the glutamate synthase family. Interacts with SHM1. [3Fe-4S] cluster serves as cofactor. It depends on FAD as a cofactor. FMN is required as a cofactor. In terms of tissue distribution, highly expressed in leaves. High expression in the leaf mesophyll and phloem companion cell-sieve element complex.

The protein localises to the plastid. It is found in the chloroplast stroma. Its subcellular location is the mitochondrion matrix. The enzyme catalyses 2 oxidized [2Fe-2S]-[ferredoxin] + 2 L-glutamate = L-glutamine + 2 reduced [2Fe-2S]-[ferredoxin] + 2-oxoglutarate + 2 H(+). Its pathway is amino-acid biosynthesis; L-glutamate biosynthesis via GLT pathway; L-glutamate from 2-oxoglutarate and L-glutamine (ferredoxin route): step 1/1. It functions in the pathway energy metabolism; nitrogen metabolism. Involved in glutamate biosynthesis in leaf. Required for the reassimilation of ammonium ions generated during photorespiration. This is Ferredoxin-dependent glutamate synthase 1, chloroplastic/mitochondrial from Arabidopsis thaliana (Mouse-ear cress).